The chain runs to 124 residues: uncharacterized protein (124 aa).

3 helical membrane-spanning segments follow: residues Lys-14–Gln-34, Phe-41–Tyr-61, and Met-85–Val-105.

It is found in the cell membrane. This is an uncharacterized protein from Haemophilus influenzae (strain ATCC 51907 / DSM 11121 / KW20 / Rd).